The sequence spans 238 residues: Large ribosomal subunit protein uL1 (238 aa).

It belongs to the universal ribosomal protein uL1 family. In terms of assembly, part of the 50S ribosomal subunit.

Functionally, binds directly to 23S rRNA. The L1 stalk is quite mobile in the ribosome, and is involved in E site tRNA release. In terms of biological role, protein L1 is also a translational repressor protein, it controls the translation of the L11 operon by binding to its mRNA. The protein is Large ribosomal subunit protein uL1 of Trichormus variabilis (strain ATCC 29413 / PCC 7937) (Anabaena variabilis).